Here is a 245-residue protein sequence, read N- to C-terminus: DNA repair protein RecO (245 aa).

This sequence belongs to the RecO family.

Involved in DNA repair and RecF pathway recombination. This is DNA repair protein RecO from Chromobacterium violaceum (strain ATCC 12472 / DSM 30191 / JCM 1249 / CCUG 213 / NBRC 12614 / NCIMB 9131 / NCTC 9757 / MK).